A 293-amino-acid chain; its full sequence is Nucleotide-binding protein BCQ_4976 (293 aa).

An ATP-binding site is contributed by 14–21 (GMSGAGKT). 65 to 68 (DLRG) is a binding site for GTP.

The protein belongs to the RapZ-like family.

In terms of biological role, displays ATPase and GTPase activities. This is Nucleotide-binding protein BCQ_4976 from Bacillus cereus (strain Q1).